The following is a 284-amino-acid chain: Capsid assembly scaffolding protein (284 aa).

Active-site residues include D19, H48, and S107. The stretch at 206–243 (EAVTAVAEHVQEKLSATEQRLAEMETAFSALKQEVTDR) forms a coiled coil. The segment at 258-284 (LDHTESLTQQRRSKATGGGGDALMTNC) is disordered.

This sequence belongs to the P2likevirus scaffolding protein family. Homomultimer. In terms of processing, autocleaves itself into an N-terminal fragment containing the protease activity, that remains in the capsid following maturation.

In terms of biological role, scaffolding protein and protease involved in the icosahedric procapsid assembly. Coassembles with the capsid proteins to form the procapsid, in which the scaffolding protein is found within the external shell of icosahedrally arranged capsid protein subunits. In a subsequent step the scaffolding protein molecules are cleaved by the viral protease activity. The polypeptide is Capsid assembly scaffolding protein (O) (Enterobacteriaceae (Bacteriophage P2)).